The sequence spans 122 residues: Nodulation protein NolR (122 aa).

The HTH arsR-type domain occupies 15-109 (EKHEDAEIAA…ALSDIYGDDT (95 aa)). The segment at residues 49–68 (VGALAHKVGLSQSALSQHLS) is a DNA-binding region (H-T-H motif).

In terms of assembly, binds to the operator site in homodimeric form.

In terms of biological role, negative transacting factor controlling the nod regulon. May control the expression of nodD1, nodD2, nodD3 and nodABC genes. This chain is Nodulation protein NolR (nolR), found in Rhizobium meliloti (Ensifer meliloti).